A 312-amino-acid polypeptide reads, in one-letter code: Taste receptor type 2 member 135 (312 aa).

Over 1–19 the chain is Extracellular; that stretch reads MSTGHTVLGCQTTDKTVVT. The helical transmembrane segment at 20–40 threads the bilayer; it reads LFIILVLLCLVAVVGNGFIII. Topologically, residues 41–66 are cytoplasmic; sequence ALGMKWLLRRTLSAHNKLLISLAASR. Residues 67-87 traverse the membrane as a helical segment; it reads FCLQCVVIGKNIYVFLNPTSF. The Extracellular segment spans residues 88–97; sequence PYNPVIQLLN. The chain crosses the membrane as a helical span at residues 98 to 118; the sequence is LMWDFLTAATIWLCSLLGFFY. The Cytoplasmic portion of the chain corresponds to 119 to 140; it reads CVKIATLTHPVFVWLKYRLPGW. Residues 141 to 161 traverse the membrane as a helical segment; that stretch reads VPWMLLSAVGMSSLTSILCFI. At 162–198 the chain is on the extracellular side; it reads GNYMIYQNHAKSGHQPWNVTGNSLRHSLEKFYFFSIK. Asn179 carries an N-linked (GlcNAc...) asparagine glycan. A helical membrane pass occupies residues 199 to 219; it reads IIMWTIPTVVFSIFMSLLLVS. Over 220–244 the chain is Cytoplasmic; that stretch reads LVRHMKKTFLALSELRDVWAQAHFK. Residues 245 to 265 form a helical membrane-spanning segment; sequence ALLPLLSFIVLFISCFLTLVL. Residues 266 to 277 are Extracellular-facing; the sequence is SSASNTPYQEFR. The chain crosses the membrane as a helical span at residues 278 to 298; that stretch reads YWMWQVVIHLCTVIHPIVILF. Residues 299 to 312 lie on the Cytoplasmic side of the membrane; the sequence is SNPVLRVVIKRGCC.

This sequence belongs to the G-protein coupled receptor T2R family.

Its subcellular location is the membrane. Its function is as follows. Putative taste receptor which may play a role in the perception of bitterness. This Mus musculus (Mouse) protein is Taste receptor type 2 member 135 (Tas2r135).